Consider the following 84-residue polypeptide: Small ribosomal subunit protein uS17 (84 aa).

It belongs to the universal ribosomal protein uS17 family. In terms of assembly, part of the 30S ribosomal subunit.

Its function is as follows. One of the primary rRNA binding proteins, it binds specifically to the 5'-end of 16S ribosomal RNA. This chain is Small ribosomal subunit protein uS17, found in Clostridium perfringens (strain ATCC 13124 / DSM 756 / JCM 1290 / NCIMB 6125 / NCTC 8237 / Type A).